We begin with the raw amino-acid sequence, 146 residues long: Large ribosomal subunit protein uL15 (146 aa).

Residues 1-13 (MKLHELKAAEGSR) are compositionally biased toward basic and acidic residues. The segment at 1–61 (MKLHELKAAE…GGQTPLFRRM (61 aa)) is disordered. Composition is skewed to gly residues over residues 23 to 35 (TSSG…GRGQ) and 42 to 52 (SGGGVRLGFEG).

Belongs to the universal ribosomal protein uL15 family. As to quaternary structure, part of the 50S ribosomal subunit.

Its function is as follows. Binds to the 23S rRNA. In Streptococcus uberis (strain ATCC BAA-854 / 0140J), this protein is Large ribosomal subunit protein uL15.